The chain runs to 200 residues: Holliday junction branch migration complex subunit RuvA (200 aa).

The domain I stretch occupies residues 1–64 (MYAYFRGRVV…EDALQLYGFS (64 aa)). The segment at 65 to 143 (SEEEKQLFRL…KLSPPGAAAT (79 aa)) is domain II. The flexible linker stretch occupies residues 144–154 (PAGAVQCGIRE). The segment at 154–200 (EDATNALLTLGFSRTAAQQAVAGVLEANPGGSVEDVVKSALLAMHNR) is domain III.

This sequence belongs to the RuvA family. As to quaternary structure, homotetramer. Forms an RuvA(8)-RuvB(12)-Holliday junction (HJ) complex. HJ DNA is sandwiched between 2 RuvA tetramers; dsDNA enters through RuvA and exits via RuvB. An RuvB hexamer assembles on each DNA strand where it exits the tetramer. Each RuvB hexamer is contacted by two RuvA subunits (via domain III) on 2 adjacent RuvB subunits; this complex drives branch migration. In the full resolvosome a probable DNA-RuvA(4)-RuvB(12)-RuvC(2) complex forms which resolves the HJ.

Its subcellular location is the cytoplasm. In terms of biological role, the RuvA-RuvB-RuvC complex processes Holliday junction (HJ) DNA during genetic recombination and DNA repair, while the RuvA-RuvB complex plays an important role in the rescue of blocked DNA replication forks via replication fork reversal (RFR). RuvA specifically binds to HJ cruciform DNA, conferring on it an open structure. The RuvB hexamer acts as an ATP-dependent pump, pulling dsDNA into and through the RuvAB complex. HJ branch migration allows RuvC to scan DNA until it finds its consensus sequence, where it cleaves and resolves the cruciform DNA. The chain is Holliday junction branch migration complex subunit RuvA from Chlorobium luteolum (strain DSM 273 / BCRC 81028 / 2530) (Pelodictyon luteolum).